The following is a 344-amino-acid chain: Uroporphyrinogen decarboxylase (344 aa).

Substrate-binding positions include 24-28 (RQAGR), F43, D74, Y149, S204, and H319.

The protein belongs to the uroporphyrinogen decarboxylase family. As to quaternary structure, homodimer.

Its subcellular location is the cytoplasm. The enzyme catalyses uroporphyrinogen III + 4 H(+) = coproporphyrinogen III + 4 CO2. The protein operates within porphyrin-containing compound metabolism; protoporphyrin-IX biosynthesis; coproporphyrinogen-III from 5-aminolevulinate: step 4/4. In terms of biological role, catalyzes the decarboxylation of four acetate groups of uroporphyrinogen-III to yield coproporphyrinogen-III. The protein is Uroporphyrinogen decarboxylase of Agrobacterium fabrum (strain C58 / ATCC 33970) (Agrobacterium tumefaciens (strain C58)).